We begin with the raw amino-acid sequence, 195 residues long: MPKLGMQSIRRRQLIDATLEAINEVGMHDATIAQIARRAGVSTGIISHYFRDKNGLLEATMRDITSQLRDAVLNRLHALPQGSAEQRLQAIVGGNFDETQVSSAAMKAWLAFWASSMHQPMLYRLQQVSSRRLLSNLVSEFHRELPRQQAQEAGYGLAALIDGLWLRAALSGKPLDKPLAHSLTRHFITQHLPTD.

The HTH tetR-type domain maps to 8-68 (SIRRRQLIDA…ATMRDITSQL (61 aa)). The H-T-H motif DNA-binding region spans 31 to 50 (TIAQIARRAGVSTGIISHYF).

It functions in the pathway amine and polyamine biosynthesis; betaine biosynthesis via choline pathway [regulation]. Its function is as follows. Repressor involved in the biosynthesis of the osmoprotectant glycine betaine. It represses transcription of the choline transporter BetT and the genes of BetAB involved in the synthesis of glycine betaine. The polypeptide is HTH-type transcriptional regulator BetI (Escherichia coli (strain SMS-3-5 / SECEC)).